The primary structure comprises 374 residues: DNA replication and repair protein RecF (374 aa).

30-37 (GNNAQGKS) serves as a coordination point for ATP.

This sequence belongs to the RecF family.

The protein resides in the cytoplasm. Its function is as follows. The RecF protein is involved in DNA metabolism; it is required for DNA replication and normal SOS inducibility. RecF binds preferentially to single-stranded, linear DNA. It also seems to bind ATP. The protein is DNA replication and repair protein RecF of Nostoc punctiforme (strain ATCC 29133 / PCC 73102).